The chain runs to 357 residues: DNA integrity scanning protein DisA (357 aa).

The 139-residue stretch at 8–146 (VKSMINILQL…GNLRYTLKDI (139 aa)) folds into the DAC domain. ATP contacts are provided by residues Gly75, Leu93, and 106 to 110 (MRHRT).

This sequence belongs to the DisA family. Homooctamer. Mg(2+) serves as cofactor.

The enzyme catalyses 2 ATP = 3',3'-c-di-AMP + 2 diphosphate. Its function is as follows. Participates in a DNA-damage check-point that is active prior to asymmetric division when DNA is damaged. DisA forms globular foci that rapidly scan along the chromosomes during sporulation, searching for lesions. When a lesion is present, DisA pauses at the lesion site. This triggers a cellular response that culminates in a temporary block in sporulation initiation. In terms of biological role, also has diadenylate cyclase activity, catalyzing the condensation of 2 ATP molecules into cyclic di-AMP (c-di-AMP). c-di-AMP acts as a signaling molecule that couples DNA integrity with progression of sporulation. The rise in c-di-AMP level generated by DisA while scanning the chromosome, operates as a positive signal that advances sporulation; upon encountering a lesion, the DisA focus arrests at the damaged site and halts c-di-AMP synthesis. The protein is DNA integrity scanning protein DisA of Bacillus cereus (strain ATCC 14579 / DSM 31 / CCUG 7414 / JCM 2152 / NBRC 15305 / NCIMB 9373 / NCTC 2599 / NRRL B-3711).